Here is a 117-residue protein sequence, read N- to C-terminus: uncharacterized protein (117 aa).

Residues 1 to 20 (METKKLIGKPLQPARPVRHL) are disordered.

This is an uncharacterized protein from Homo sapiens (Human).